The chain runs to 944 residues: Neutral alpha-glucosidase AB (944 aa).

Residues 1-32 form the signal peptide; the sequence is MAAVAAVAARRRRSWTGLVLACLGVCLGLTLA. Cysteine 41 and cysteine 47 are disulfide-bonded. Serine 52 carries the post-translational modification Phosphoserine. N-linked (GlcNAc...) asparagine glycosylation occurs at asparagine 97. The disordered stretch occupies residues 181 to 225; sequence QRAPRVSQGSKDPAEGDGAQPEEAPGDGDKPEEIQGKAEKDEPGA. Positions 207 to 225 are enriched in basic and acidic residues; that stretch reads DGDKPEEIQGKAEKDEPGA. 2 residues coordinate substrate: aspartate 283 and aspartate 429. Aspartate 542 (nucleophile) is an active-site residue. Residue arginine 602 coordinates substrate. Aspartate 618 (proton donor) is an active-site residue. Residues cysteine 633 and cysteine 644 are joined by a disulfide bond. A substrate-binding site is contributed by histidine 676.

This sequence belongs to the glycosyl hydrolase 31 family. Heterodimer of a catalytic alpha subunit (GANAB) and a beta subunit (PRKCSH). Binds glycosylated PTPRC. Contains sialylated polysaccharide chains.

It is found in the endoplasmic reticulum. Its subcellular location is the golgi apparatus. It localises to the melanosome. The enzyme catalyses N(4)-(alpha-D-Glc-(1-&gt;3)-alpha-D-Man-(1-&gt;2)-alpha-D-Man-(1-&gt;2)-alpha-D-Man-(1-&gt;3)-[alpha-D-Man-(1-&gt;2)-alpha-D-Man-(1-&gt;3)-[alpha-D-Man-(1-&gt;2)-alpha-D-Man-(1-&gt;6)]-alpha-D-Man-(1-&gt;6)]-beta-D-Man-(1-&gt;4)-beta-D-GlcNAc-(1-&gt;4)-beta-D-GlcNAc)-L-asparaginyl-[protein] + H2O = N(4)-(alpha-D-Man-(1-&gt;2)-alpha-D-Man-(1-&gt;2)-alpha-D-Man-(1-&gt;3)-[alpha-D-Man-(1-&gt;2)-alpha-D-Man-(1-&gt;3)-[alpha-D-Man-(1-&gt;2)-alpha-D-Man-(1-&gt;6)]-alpha-D-Man-(1-&gt;6)]-beta-D-Man-(1-&gt;4)-beta-D-GlcNAc-(1-&gt;4)-beta-D-GlcNAc)-L-asparaginyl-[protein] (N-glucan mannose isomer 9A1,2,3B1,2,3) + beta-D-glucose. It catalyses the reaction N(4)-(alpha-D-Glc-(1-&gt;3)-alpha-D-Glc-(1-&gt;3)-alpha-D-Man-(1-&gt;2)-alpha-D-Man-(1-&gt;2)-alpha-D-Man-(1-&gt;3)-[alpha-D-Man-(1-&gt;2)-alpha-D-Man-(1-&gt;3)-[alpha-D-Man-(1-&gt;2)-alpha-D-Man-(1-&gt;6)]-alpha-D-Man-(1-&gt;6)]-beta-D-Man-(1-&gt;4)-beta-D-GlcNAc-(1-&gt;4)-beta-D-GlcNAc)-L-asparaginyl-[protein] + H2O = N(4)-(alpha-D-Glc-(1-&gt;3)-alpha-D-Man-(1-&gt;2)-alpha-D-Man-(1-&gt;2)-alpha-D-Man-(1-&gt;3)-[alpha-D-Man-(1-&gt;2)-alpha-D-Man-(1-&gt;3)-[alpha-D-Man-(1-&gt;2)-alpha-D-Man-(1-&gt;6)]-alpha-D-Man-(1-&gt;6)]-beta-D-Man-(1-&gt;4)-beta-D-GlcNAc-(1-&gt;4)-beta-D-GlcNAc)-L-asparaginyl-[protein] + beta-D-glucose. Its pathway is glycan metabolism; N-glycan metabolism. Its function is as follows. Catalytic subunit of glucosidase II that cleaves sequentially the 2 innermost alpha-1,3-linked glucose residues from the Glc(2)Man(9)GlcNAc(2) oligosaccharide precursor of immature glycoproteins. Required for PKD1/Polycystin-1 and PKD2/Polycystin-2 maturation and localization to the cell surface and cilia. The chain is Neutral alpha-glucosidase AB (GANAB) from Sus scrofa (Pig).